A 404-amino-acid polypeptide reads, in one-letter code: Probable tRNA sulfurtransferase (404 aa).

Residues 60-165 (QPIVEALKLV…DEAAYISYEE (106 aa)) enclose the THUMP domain. ATP-binding positions include 183-184 (ML), 208-209 (HF), arginine 265, glycine 287, and glutamine 296.

Belongs to the ThiI family.

The protein resides in the cytoplasm. The catalysed reaction is [ThiI sulfur-carrier protein]-S-sulfanyl-L-cysteine + a uridine in tRNA + 2 reduced [2Fe-2S]-[ferredoxin] + ATP + H(+) = [ThiI sulfur-carrier protein]-L-cysteine + a 4-thiouridine in tRNA + 2 oxidized [2Fe-2S]-[ferredoxin] + AMP + diphosphate. The enzyme catalyses [ThiS sulfur-carrier protein]-C-terminal Gly-Gly-AMP + S-sulfanyl-L-cysteinyl-[cysteine desulfurase] + AH2 = [ThiS sulfur-carrier protein]-C-terminal-Gly-aminoethanethioate + L-cysteinyl-[cysteine desulfurase] + A + AMP + 2 H(+). It participates in cofactor biosynthesis; thiamine diphosphate biosynthesis. Catalyzes the ATP-dependent transfer of a sulfur to tRNA to produce 4-thiouridine in position 8 of tRNAs, which functions as a near-UV photosensor. Also catalyzes the transfer of sulfur to the sulfur carrier protein ThiS, forming ThiS-thiocarboxylate. This is a step in the synthesis of thiazole, in the thiamine biosynthesis pathway. The sulfur is donated as persulfide by IscS. The sequence is that of Probable tRNA sulfurtransferase from Streptococcus pyogenes serotype M4 (strain MGAS10750).